Here is a 401-residue protein sequence, read N- to C-terminus: L-rhamnonate dehydratase (401 aa).

Substrate-binding residues include His-29 and Arg-55. Mg(2+) is bound by residues Asp-222, Glu-248, and Glu-276. His-325 functions as the Proton acceptor in the catalytic mechanism. Glu-345 provides a ligand contact to substrate.

It belongs to the mandelate racemase/muconate lactonizing enzyme family. RhamD subfamily. Homooctamer; tetramer of dimers. The cofactor is Mg(2+).

It carries out the reaction L-rhamnonate = 2-dehydro-3-deoxy-L-rhamnonate + H2O. Functionally, catalyzes the dehydration of L-rhamnonate to 2-keto-3-deoxy-L-rhamnonate (KDR). In Escherichia coli O157:H7, this protein is L-rhamnonate dehydratase.